The primary structure comprises 530 residues: MSATKSIVGEALEYVNIGLSHFLALPLAQRISLIIIIPFIYNIVWQLLYSLRKDRPPLVFYWIPWVGSAVVYGMKPYEFFEECQKKYGDIFSFVLLGRVMTVYLGPKGHEFVFNAKLADVSAEAAYAHLTTPVFGKGVIYDCPNSRLMEQKKFVKGALTKEAFKSYVPLIAEEVYKYFRDSKNFRLNERTTGTIDVMVTQPEMTIFTASRSLLGKEMRAKLDTDFAYLYSDLDKGFTPINFVFPNLPLEHYRKRDHAQKAISGTYMSLIKERRKNNDIQDRDLIDSLMKNSTYKDGVKMTDQEIANLLIGVLMGGQHTSAATSAWILLHLAERPDVQQELYEEQMRVLDGGKKELTYDLLQEMPLLNQTIKETLRMHHPLHSLFRKVMKDMHVPNTSYVIPAGYHVLVSPGYTHLRDEYFPNAHQFNIHRWNKDSASSYSVGEEVDYGFGAISKGVSSPYLPFGGGRHRCIGEHFAYCQLGVLMSIFIRTLKWHYPEGKTVPPPDFTSMVTLPTGPAKIIWEKRNPEQKI.

At 1–20 the chain is on the lumenal side; it reads MSATKSIVGEALEYVNIGLS. Residues 21-41 traverse the membrane as a helical segment; sequence HFLALPLAQRISLIIIIPFIY. At 42–530 the chain is on the cytoplasmic side; sequence NIVWQLLYSL…WEKRNPEQKI (489 aa). K116 is covalently cross-linked (Glycyl lysine isopeptide (Lys-Gly) (interchain with G-Cter in ubiquitin)). Y126 lines the lanosterol pocket. Residue G314 participates in itraconazole binding. Glycyl lysine isopeptide (Lys-Gly) (interchain with G-Cter in ubiquitin) cross-links involve residues K353 and K454. At S458 the chain carries Phosphoserine. C470 contributes to the heme binding site.

The protein belongs to the cytochrome P450 family. In terms of assembly, interacts with ERG28. Heme serves as cofactor.

It localises to the endoplasmic reticulum membrane. The enzyme catalyses a 14alpha-methyl steroid + 3 reduced [NADPH--hemoprotein reductase] + 3 O2 = a Delta(14) steroid + formate + 3 oxidized [NADPH--hemoprotein reductase] + 4 H2O + 4 H(+). It catalyses the reaction a 14alpha-methyl steroid + reduced [NADPH--hemoprotein reductase] + O2 = a 14alpha-hydroxymethyl steroid + oxidized [NADPH--hemoprotein reductase] + H2O + H(+). It carries out the reaction a 14alpha-hydroxymethyl steroid + reduced [NADPH--hemoprotein reductase] + O2 = a 14alpha-formyl steroid + oxidized [NADPH--hemoprotein reductase] + 2 H2O + H(+). The catalysed reaction is a 14alpha-formyl steroid + reduced [NADPH--hemoprotein reductase] + O2 = a Delta(14) steroid + formate + oxidized [NADPH--hemoprotein reductase] + H2O + 2 H(+). The enzyme catalyses lanosterol + 3 reduced [NADPH--hemoprotein reductase] + 3 O2 = 4,4-dimethyl-5alpha-cholesta-8,14,24-trien-3beta-ol + formate + 3 oxidized [NADPH--hemoprotein reductase] + 4 H2O + 4 H(+). It catalyses the reaction lanosterol + reduced [NADPH--hemoprotein reductase] + O2 = 32-hydroxylanosterol + oxidized [NADPH--hemoprotein reductase] + H2O + H(+). It carries out the reaction 32-hydroxylanosterol + reduced [NADPH--hemoprotein reductase] + O2 = 32-oxolanosterol + oxidized [NADPH--hemoprotein reductase] + 2 H2O + H(+). The catalysed reaction is 32-oxolanosterol + reduced [NADPH--hemoprotein reductase] + O2 = 4,4-dimethyl-5alpha-cholesta-8,14,24-trien-3beta-ol + formate + oxidized [NADPH--hemoprotein reductase] + H2O + 2 H(+). It functions in the pathway steroid biosynthesis; zymosterol biosynthesis; zymosterol from lanosterol: step 1/6. Functionally, sterol 14alpha-demethylase that plays a critical role in the third module of ergosterol biosynthesis pathway, being ergosterol the major sterol component in fungal membranes that participates in a variety of functions. The third module or late pathway involves the ergosterol synthesis itself through consecutive reactions that mainly occur in the endoplasmic reticulum (ER) membrane. Starting from lanosterol (lanosta-8,24-dien-3beta-ol), it catalyzes the three-step oxidative removal of the 14alpha-methyl group (C-32) of the sterol in the form of formate, and converts the sterol to 4,4-dimethyl-5alpha-cholesta-8,14,24-trien-3beta-ol, which is critical for ergosterol biosynthesis. Can demethylate substrates not intrinsic to yeast, such as eburicol (24-methylene-24,25-dihydrolanosterol) at a similar rate to lanosterol, and at a lower rate the 24,25-dihydrolanosterol (DHL) to 4,4-dimethyl-8,14-cholestadien-3beta-ol. In Saccharomyces cerevisiae (strain ATCC 204508 / S288c) (Baker's yeast), this protein is Lanosterol 14-alpha demethylase CYP51.